Reading from the N-terminus, the 67-residue chain is Large ribosomal subunit protein uL29 (67 aa).

The protein belongs to the universal ribosomal protein uL29 family.

The chain is Large ribosomal subunit protein uL29 from Desulfitobacterium hafniense (strain Y51).